We begin with the raw amino-acid sequence, 101 residues long: Large ribosomal subunit protein P1 (101 aa).

The segment at A65–T89 is disordered. Residues E73 to D87 show a composition bias toward basic and acidic residues.

Belongs to the eukaryotic ribosomal protein P1/P2 family. In terms of assembly, part of the 50S ribosomal subunit. Homodimer, it forms part of the ribosomal stalk which helps the ribosome interact with GTP-bound translation factors. Forms a heptameric uL10/P0(P1)2(P1)2(P1)2 complex, where uL10/P0 forms an elongated spine to which the P1 dimers bind in a sequential fashion.

Forms part of the ribosomal stalk, playing a central role in the interaction of the ribosome with GTP-bound translation factors. This Methanothermococcus thermolithotrophicus (Methanococcus thermolithotrophicus) protein is Large ribosomal subunit protein P1.